A 177-amino-acid chain; its full sequence is ATP synthase subunit delta (177 aa).

This sequence belongs to the ATPase delta chain family. F-type ATPases have 2 components, F(1) - the catalytic core - and F(0) - the membrane proton channel. F(1) has five subunits: alpha(3), beta(3), gamma(1), delta(1), epsilon(1). F(0) has three main subunits: a(1), b(2) and c(10-14). The alpha and beta chains form an alternating ring which encloses part of the gamma chain. F(1) is attached to F(0) by a central stalk formed by the gamma and epsilon chains, while a peripheral stalk is formed by the delta and b chains.

Its subcellular location is the cell membrane. F(1)F(0) ATP synthase produces ATP from ADP in the presence of a proton or sodium gradient. F-type ATPases consist of two structural domains, F(1) containing the extramembraneous catalytic core and F(0) containing the membrane proton channel, linked together by a central stalk and a peripheral stalk. During catalysis, ATP synthesis in the catalytic domain of F(1) is coupled via a rotary mechanism of the central stalk subunits to proton translocation. Its function is as follows. This protein is part of the stalk that links CF(0) to CF(1). It either transmits conformational changes from CF(0) to CF(1) or is implicated in proton conduction. This Buchnera aphidicola subsp. Acyrthosiphon pisum (strain 5A) protein is ATP synthase subunit delta.